Reading from the N-terminus, the 213-residue chain is 3,4-dihydroxy-2-butanone 4-phosphate synthase (213 aa).

D-ribulose 5-phosphate-binding positions include 37-38 (RE), Asp42, 150-154 (RAGHT), and Glu174. A Mg(2+)-binding site is contributed by Glu38. His153 is a Mg(2+) binding site.

Belongs to the DHBP synthase family. Homodimer. It depends on Mg(2+) as a cofactor. Mn(2+) serves as cofactor.

The enzyme catalyses D-ribulose 5-phosphate = (2S)-2-hydroxy-3-oxobutyl phosphate + formate + H(+). It functions in the pathway cofactor biosynthesis; riboflavin biosynthesis; 2-hydroxy-3-oxobutyl phosphate from D-ribulose 5-phosphate: step 1/1. Catalyzes the conversion of D-ribulose 5-phosphate to formate and 3,4-dihydroxy-2-butanone 4-phosphate. This chain is 3,4-dihydroxy-2-butanone 4-phosphate synthase, found in Wigglesworthia glossinidia brevipalpis.